We begin with the raw amino-acid sequence, 88 residues long: UPF0297 protein LAR_0520 (88 aa).

Belongs to the UPF0297 family.

The chain is UPF0297 protein LAR_0520 from Limosilactobacillus reuteri subsp. reuteri (strain JCM 1112) (Lactobacillus reuteri).